The sequence spans 131 residues: Torsin-1A-interacting protein 2, isoform IFRG15 (131 aa).

This chain is Torsin-1A-interacting protein 2, isoform IFRG15 (TOR1AIP2), found in Homo sapiens (Human).